Here is a 328-residue protein sequence, read N- to C-terminus: D-cysteine desulfhydrase (328 aa).

Residue K51 is modified to N6-(pyridoxal phosphate)lysine.

This sequence belongs to the ACC deaminase/D-cysteine desulfhydrase family. Homodimer. Requires pyridoxal 5'-phosphate as cofactor.

The enzyme catalyses D-cysteine + H2O = hydrogen sulfide + pyruvate + NH4(+) + H(+). Functionally, catalyzes the alpha,beta-elimination reaction of D-cysteine and of several D-cysteine derivatives. It could be a defense mechanism against D-cysteine. The chain is D-cysteine desulfhydrase from Escherichia coli O9:H4 (strain HS).